We begin with the raw amino-acid sequence, 682 residues long: Potassium-transporting ATPase ATP-binding subunit (682 aa).

4 consecutive transmembrane segments (helical) span residues Pro-34 to Ala-54, Ala-62 to Ala-82, Ile-219 to Leu-239, and Val-254 to Ile-274. Asp-307 serves as the catalytic 4-aspartylphosphate intermediate. ATP is bound by residues Asp-344, Glu-348, Phe-377 to Ser-384, and Lys-395. Mg(2+) contacts are provided by Asp-518 and Asp-522. 3 helical membrane passes run Phe-588–Met-608, Ala-616–Leu-636, and Ile-656–Leu-676.

It belongs to the cation transport ATPase (P-type) (TC 3.A.3) family. Type IA subfamily. In terms of assembly, the system is composed of three essential subunits: KdpA, KdpB and KdpC.

Its subcellular location is the cell inner membrane. It carries out the reaction K(+)(out) + ATP + H2O = K(+)(in) + ADP + phosphate + H(+). In terms of biological role, part of the high-affinity ATP-driven potassium transport (or Kdp) system, which catalyzes the hydrolysis of ATP coupled with the electrogenic transport of potassium into the cytoplasm. This subunit is responsible for energy coupling to the transport system and for the release of the potassium ions to the cytoplasm. This is Potassium-transporting ATPase ATP-binding subunit from Escherichia coli O17:K52:H18 (strain UMN026 / ExPEC).